We begin with the raw amino-acid sequence, 148 residues long: Oleosin 16 kDa (148 aa).

A disordered region spans residues Met1–Glu21. Residue Ala2 is modified to N-acetylalanine. The polar stretch occupies residues Ala2–Lys34. Residues Val8–Arg17 are compositionally biased toward gly residues. The hydrophobic stretch occupies residues Thr35 to Tyr106. Transmembrane regions (helical) follow at residues Gly43–Ala63, Val66–Ala86, and Gly87–Lys107.

Belongs to the oleosin family.

The protein resides in the lipid droplet. It localises to the membrane. Its function is as follows. May have a structural role to stabilize the lipid body during desiccation of the seed by preventing coalescence of the oil. Probably interacts with both lipid and phospholipid moieties of lipid bodies. May also provide recognition signals for specific lipase anchorage in lipolysis during seedling growth. The polypeptide is Oleosin 16 kDa (OLE16) (Oryza sativa subsp. japonica (Rice)).